Here is a 92-residue protein sequence, read N- to C-terminus: MQERINRRKALTGVVVSDKSSKTIVVAVDTFKKDPLYQKRFKSTKKFAAHDEKEEAQMGDIVKIVGTRPLSKTKFFRLEKIRQRAKEGKGSE.

It belongs to the universal ribosomal protein uS17 family. Part of the 30S ribosomal subunit.

One of the primary rRNA binding proteins, it binds specifically to the 5'-end of 16S ribosomal RNA. The sequence is that of Small ribosomal subunit protein uS17 from Mycoplasma mobile (strain ATCC 43663 / 163K / NCTC 11711) (Mesomycoplasma mobile).